A 439-amino-acid chain; its full sequence is Xylose isomerase (439 aa).

Catalysis depends on residues His101 and Asp104. Mg(2+) contacts are provided by Glu232, Glu268, His271, Asp296, Asp307, Asp309, and Asp339.

This sequence belongs to the xylose isomerase family. As to quaternary structure, homotetramer. Mg(2+) serves as cofactor.

It localises to the cytoplasm. It carries out the reaction alpha-D-xylose = alpha-D-xylulofuranose. The polypeptide is Xylose isomerase (xylA) (Lactococcus lactis subsp. lactis (strain IL1403) (Streptococcus lactis)).